The primary structure comprises 216 residues: Probable csgAB operon transcriptional regulatory protein (216 aa).

Residues 149–214 enclose the HTH luxR-type domain; it reads NSTESALLTH…QAVSWANDNL (66 aa). The H-T-H motif DNA-binding region spans 173–192; the sequence is NNEIARSLFISENTVKTHLY.

Its function is as follows. The master regulator for adhesive curli fimbriae expression; necessary for transcription of the csgAB operon. Plays a positive role in biofilm formation. The sequence is that of Probable csgAB operon transcriptional regulatory protein from Salmonella typhimurium (strain LT2 / SGSC1412 / ATCC 700720).